We begin with the raw amino-acid sequence, 358 residues long: Aromatic amino acid aminotransferase (358 aa).

Residue K222 is modified to N6-(pyridoxal phosphate)lysine.

The protein belongs to the class-II pyridoxal-phosphate-dependent aminotransferase family. In terms of assembly, homodimer. It depends on pyridoxal 5'-phosphate as a cofactor.

The enzyme catalyses an aromatic L-alpha-amino acid + 2-oxoglutarate = an aromatic oxo-acid + L-glutamate. Functionally, aminotransferase that catalyzes the conversion of aromatic amino acids and 2-oxoglutarate into corresponding aromatic oxo acids and L-glutamate. This chain is Aromatic amino acid aminotransferase, found in Mycobacterium sp. (strain JLS).